The following is a 132-amino-acid chain: Matrix protein (132 aa).

The protein localises to the virion membrane. Its function is as follows. Envelope protein that may play a role in host-cell attachment and viral genome entry. This Halorubrum pleomorphic virus 1 (HRPV-1) protein is Matrix protein.